Consider the following 190-residue polypeptide: Lipid A acyltransferase PagP (190 aa).

An N-terminal signal peptide occupies residues 1 to 29; it reads MYVAMIIRKYFLIIALLVMPWLAIPSVSA. Residues H62, D105, and S106 contribute to the active site.

It belongs to the lipid A palmitoyltransferase family. Homodimer.

Its subcellular location is the cell outer membrane. The catalysed reaction is a lipid A + a 1,2-diacyl-sn-glycero-3-phosphocholine = a hepta-acyl lipid A + a 2-acyl-sn-glycero-3-phosphocholine. It carries out the reaction a lipid IVA + a 1,2-diacyl-sn-glycero-3-phosphocholine = a lipid IVB + a 2-acyl-sn-glycero-3-phosphocholine. It catalyses the reaction a lipid IIA + a 1,2-diacyl-sn-glycero-3-phosphocholine = a lipid IIB + a 2-acyl-sn-glycero-3-phosphocholine. Functionally, transfers a fatty acid residue from the sn-1 position of a phospholipid to the N-linked hydroxyfatty acid chain on the proximal unit of lipid A or its precursors. This is Lipid A acyltransferase PagP from Salmonella typhi.